The sequence spans 159 residues: Cyclic pyranopterin monophosphate synthase (159 aa).

Residues 75–77 and 113–114 contribute to the substrate site; these read LCH and ME. D128 is an active-site residue.

This sequence belongs to the MoaC family. Homohexamer; trimer of dimers.

The enzyme catalyses (8S)-3',8-cyclo-7,8-dihydroguanosine 5'-triphosphate = cyclic pyranopterin phosphate + diphosphate. Its pathway is cofactor biosynthesis; molybdopterin biosynthesis. Its function is as follows. Catalyzes the conversion of (8S)-3',8-cyclo-7,8-dihydroguanosine 5'-triphosphate to cyclic pyranopterin monophosphate (cPMP). This chain is Cyclic pyranopterin monophosphate synthase, found in Heliobacterium modesticaldum (strain ATCC 51547 / Ice1).